Consider the following 103-residue polypeptide: Large ribosomal subunit protein bL21 (103 aa).

This sequence belongs to the bacterial ribosomal protein bL21 family. Part of the 50S ribosomal subunit. Contacts protein L20.

Functionally, this protein binds to 23S rRNA in the presence of protein L20. In Vesicomyosocius okutanii subsp. Calyptogena okutanii (strain HA), this protein is Large ribosomal subunit protein bL21.